Reading from the N-terminus, the 1296-residue chain is Clustered mitochondria protein homolog (1296 aa).

The interval methionine 1 to glutamate 31 is disordered. The segment covering glycine 8–glycine 26 has biased composition (basic and acidic residues). One can recognise a Clu domain in the interval arginine 333–leucine 575. Positions leucine 662 to valine 689 form a coiled coil. 4 TPR repeats span residues alanine 970–valine 1003, cysteine 1012–isoleucine 1045, alanine 1096–tyrosine 1129, and alanine 1138–glutamine 1171. Residues glutamine 1242 to glutamate 1274 adopt a coiled-coil conformation. The tract at residues alanine 1261–aspartate 1296 is disordered. Basic and acidic residues predominate over residues lysine 1263 to glutamate 1276. Residues serine 1278–aspartate 1296 are compositionally biased toward polar residues.

It belongs to the CLU family.

Its subcellular location is the cytoplasm. The protein localises to the cytoplasmic granule. Functionally, mRNA-binding protein involved in proper cytoplasmic distribution of mitochondria. Specifically binds mRNAs of nuclear-encoded mitochondrial proteins in the cytoplasm and regulates transport or translation of these transcripts close to mitochondria, playing a role in mitochondrial biogenesis. In Xenopus tropicalis (Western clawed frog), this protein is Clustered mitochondria protein homolog.